A 303-amino-acid polypeptide reads, in one-letter code: Ribonuclease Z (303 aa).

Residues His-61, His-63, Asp-65, His-66, His-138, Asp-206, and His-265 each coordinate Zn(2+). The active-site Proton acceptor is Asp-65.

The protein belongs to the RNase Z family. As to quaternary structure, homodimer. Requires Zn(2+) as cofactor.

The enzyme catalyses Endonucleolytic cleavage of RNA, removing extra 3' nucleotides from tRNA precursor, generating 3' termini of tRNAs. A 3'-hydroxy group is left at the tRNA terminus and a 5'-phosphoryl group is left at the trailer molecule.. Zinc phosphodiesterase, which displays some tRNA 3'-processing endonuclease activity. Probably involved in tRNA maturation, by removing a 3'-trailer from precursor tRNA. This is Ribonuclease Z from Agathobacter rectalis (strain ATCC 33656 / DSM 3377 / JCM 17463 / KCTC 5835 / VPI 0990) (Eubacterium rectale).